The chain runs to 25 residues: Growth-blocking peptide (25 aa).

A disulfide bond links C7 and C19. Glutamine amide is present on Q25.

Belongs to the GBP/PSP1/paralytic peptide family. Hemolymph.

Functionally, biogenic peptide that prevents, in lepidopteran, the onset of metamorphosis from larva to pupa. This growth-blocking peptide has repressive activity against juvenile hormone esterase. In Cotesia kariyai (Parasitic wasp), this protein is Growth-blocking peptide.